The following is a 43-amino-acid chain: Metallothionein B (43 aa).

The interval 1–16 is beta; that stretch reads SCAGSCKCKNCRCRSC. Cys2, Cys6, Cys8, Cys11, Cys13, Cys16, Cys20, Cys21, Cys23, Cys24, Cys28, Cys31, Cys35, and Cys37 together coordinate a divalent metal cation. An alpha region spans residues 17–43; the sequence is RKSCCSCCPAGCNNCVKGCVCKEPASS.

This sequence belongs to the metallothionein superfamily. Type 1 family.

Functionally, metallothioneins have a high content of cysteine residues that bind various heavy metals. The protein is Metallothionein B of Colinus virginianus (Northern bobwhite).